The primary structure comprises 336 residues: Phospho-N-acetylmuramoyl-pentapeptide-transferase (336 aa).

A run of 10 helical transmembrane segments spans residues 3-23 (LTLI…PYFI), 53-73 (GGTV…LFSI), 78-98 (SLAL…IGFL), 118-138 (LALQ…PSGI), 143-163 (VFGY…FWVV), 174-194 (GIDG…GVIA), 200-220 (FDVL…FCFN), 226-246 (VFMG…ISIA), 251-271 (WTLL…MLQV), and 316-336 (AFLW…LYVF).

This sequence belongs to the glycosyltransferase 4 family. MraY subfamily. Requires Mg(2+) as cofactor.

The protein localises to the cell membrane. It carries out the reaction UDP-N-acetyl-alpha-D-muramoyl-L-alanyl-gamma-D-glutamyl-L-lysyl-D-alanyl-D-alanine + di-trans,octa-cis-undecaprenyl phosphate = Mur2Ac(oyl-L-Ala-gamma-D-Glu-L-Lys-D-Ala-D-Ala)-di-trans,octa-cis-undecaprenyl diphosphate + UMP. It participates in cell wall biogenesis; peptidoglycan biosynthesis. Functionally, catalyzes the initial step of the lipid cycle reactions in the biosynthesis of the cell wall peptidoglycan: transfers peptidoglycan precursor phospho-MurNAc-pentapeptide from UDP-MurNAc-pentapeptide onto the lipid carrier undecaprenyl phosphate, yielding undecaprenyl-pyrophosphoryl-MurNAc-pentapeptide, known as lipid I. This is Phospho-N-acetylmuramoyl-pentapeptide-transferase from Streptococcus pyogenes serotype M4 (strain MGAS10750).